Here is an 87-residue protein sequence, read N- to C-terminus: Transcription factor ILI4 (87 aa).

A bHLH domain is found at 1–54; that stretch reads MSSRRSSRSSVSEEEINELISKLQSLLPSSRRRGANQASTTKLLKETCSYIKSL.

Belongs to the bHLH protein family. Interacts with LO9-177. In terms of tissue distribution, expressed in phloem of leaf blades and sheaths, lamina joints, filaments before anthesis, vasculare bundles of the ovule, lemma and palea, and embryos.

The protein resides in the cytoplasm. Atypical and probable non DNA-binding bHLH transcription factor that acts as a positive regulator of brassinosteroid (BR) response. Controls lamina inclination by participating in two BR signaling pathways involving BRI1 and RGA1. Involved in the RLI1-dependent modulation of leaf inclination by promoting lamina joint cell elongation, especially in response to phosphate (Pi) availability. This Oryza sativa subsp. japonica (Rice) protein is Transcription factor ILI4 (ILI4).